The sequence spans 347 residues: MSLDQFLTRLDQLQSDADSAFTSASDAAALEEARVTFLGAKKGQLKDIQKMLGGIEKADKPAAGAKLNAVKSAINAAFEDAQQNLSGGDDSGADPTFDPTLPGTRPSLGHIHPITQTISHLTEIMGRMGFEVAEGPEVEDPWHNFVALNIPEDHPARDPLDNFYLATAKDPSGKSSVSAGDEGSQLLRSQTSTVQIRVMKQVEPPIRIISLGRVYRPDAPDATHFPMFHQMEGLLVDTNVTMANLKTVLRVFANNYLGEDVEIRFRPSFFPFTEPSVEVDFLWNGTWIEFGGAGMIDPNVFAAVGYDPEKVSGFAFGLGVERLCMRRHGITDIRDLYSGDLRFLKQF.

The segment at 83–111 (QNLSGGDDSGADPTFDPTLPGTRPSLGHI) is disordered. Glutamate 274 is a binding site for Mg(2+).

It belongs to the class-II aminoacyl-tRNA synthetase family. Phe-tRNA synthetase alpha subunit type 1 subfamily. As to quaternary structure, tetramer of two alpha and two beta subunits. Mg(2+) is required as a cofactor.

The protein localises to the cytoplasm. It catalyses the reaction tRNA(Phe) + L-phenylalanine + ATP = L-phenylalanyl-tRNA(Phe) + AMP + diphosphate + H(+). In Rhodopirellula baltica (strain DSM 10527 / NCIMB 13988 / SH1), this protein is Phenylalanine--tRNA ligase alpha subunit.